The sequence spans 239 residues: Fatty acid metabolism regulator protein (239 aa).

Residues 6 to 74 (KGPASFAEKY…HGKPTQVNNF (69 aa)) form the HTH gntR-type domain. The H-T-H motif DNA-binding region spans 34–53 (ERELSELIGVTRTTLREVLQ).

In terms of assembly, homodimer.

Its subcellular location is the cytoplasm. Multifunctional regulator of fatty acid metabolism. This is Fatty acid metabolism regulator protein from Shewanella frigidimarina (strain NCIMB 400).